The primary structure comprises 188 residues: NADH-quinone oxidoreductase subunit I (188 aa).

4Fe-4S ferredoxin-type domains lie at 44–74 (LNRY…VEGA) and 90–119 (RVYQ…MTNE). 8 residues coordinate [4Fe-4S] cluster: Cys-54, Cys-57, Cys-60, Cys-64, Cys-99, Cys-102, Cys-105, and Cys-109. Positions 144–188 (GMVDSPHPMAPGTTAEDYYRGTVTGGAAPASQDEPEADDTAGDRP) are disordered. Residues 176–188 (DEPEADDTAGDRP) show a composition bias toward acidic residues.

It belongs to the complex I 23 kDa subunit family. NDH-1 is composed of 14 different subunits. Subunits NuoA, H, J, K, L, M, N constitute the membrane sector of the complex. [4Fe-4S] cluster is required as a cofactor.

It localises to the cell membrane. The enzyme catalyses a quinone + NADH + 5 H(+)(in) = a quinol + NAD(+) + 4 H(+)(out). Functionally, NDH-1 shuttles electrons from NADH, via FMN and iron-sulfur (Fe-S) centers, to quinones in the respiratory chain. The immediate electron acceptor for the enzyme in this species is believed to be ubiquinone. Couples the redox reaction to proton translocation (for every two electrons transferred, four hydrogen ions are translocated across the cytoplasmic membrane), and thus conserves the redox energy in a proton gradient. This is NADH-quinone oxidoreductase subunit I from Rhodococcus opacus (strain B4).